The primary structure comprises 379 residues: Cytochrome b (379 aa).

The next 4 helical transmembrane spans lie at 33 to 53, 77 to 98, 113 to 133, and 178 to 198; these read FGSL…FLAM, WLIR…FIHV, WNIG…GYVL, and FFAF…VHLL. 2 residues coordinate heme b: His-83 and His-97. 2 residues coordinate heme b: His-182 and His-196. His-201 contacts a ubiquinone. 4 consecutive transmembrane segments (helical) span residues 226 to 246, 288 to 308, 320 to 340, and 347 to 367; these read IKDL…ALFF, LGGV…PLLN, ITQT…WIGG, and FTTI…IIMP.

This sequence belongs to the cytochrome b family. The cytochrome bc1 complex contains 11 subunits: 3 respiratory subunits (MT-CYB, CYC1 and UQCRFS1), 2 core proteins (UQCRC1 and UQCRC2) and 6 low-molecular weight proteins (UQCRH/QCR6, UQCRB/QCR7, UQCRQ/QCR8, UQCR10/QCR9, UQCR11/QCR10 and a cleavage product of UQCRFS1). This cytochrome bc1 complex then forms a dimer. The cofactor is heme b.

It is found in the mitochondrion inner membrane. Its function is as follows. Component of the ubiquinol-cytochrome c reductase complex (complex III or cytochrome b-c1 complex) that is part of the mitochondrial respiratory chain. The b-c1 complex mediates electron transfer from ubiquinol to cytochrome c. Contributes to the generation of a proton gradient across the mitochondrial membrane that is then used for ATP synthesis. In Deltamys kempi (Kemp's grass mouse), this protein is Cytochrome b (MT-CYB).